We begin with the raw amino-acid sequence, 176 residues long: ATP-dependent protease subunit HslV (176 aa).

Residue Thr-2 is part of the active site. Gly-157, Cys-160, and Thr-163 together coordinate Na(+).

This sequence belongs to the peptidase T1B family. HslV subfamily. As to quaternary structure, a double ring-shaped homohexamer of HslV is capped on each side by a ring-shaped HslU homohexamer. The assembly of the HslU/HslV complex is dependent on binding of ATP.

It localises to the cytoplasm. It carries out the reaction ATP-dependent cleavage of peptide bonds with broad specificity.. Allosterically activated by HslU binding. In terms of biological role, protease subunit of a proteasome-like degradation complex believed to be a general protein degrading machinery. This chain is ATP-dependent protease subunit HslV, found in Pseudomonas entomophila (strain L48).